A 280-amino-acid chain; its full sequence is Putative ABC transporter ATP-binding protein PYRAB03730 (280 aa).

Positions 4-244 (IEVENVSFKY…VEFLERIGIR (241 aa)) constitute an ABC transporter domain. 38–45 (GPSGSGKS) lines the ATP pocket.

This sequence belongs to the ABC transporter superfamily.

Its subcellular location is the cell membrane. Probably part of an ABC transporter complex. Responsible for energy coupling to the transport system. This chain is Putative ABC transporter ATP-binding protein PYRAB03730, found in Pyrococcus abyssi (strain GE5 / Orsay).